Reading from the N-terminus, the 195-residue chain is Probable GTP-binding protein EngB (195 aa).

Residues 22 to 195 (GRPEVALAGR…WAALLPFLTE (174 aa)) form the EngB-type G domain. GTP-binding positions include 30–37 (GRSNVGKS), 57–61 (GKTQT), 75–78 (DVPG), 142–145 (TKAD), and 174–176 (FSS). Mg(2+) contacts are provided by S37 and T59.

The protein belongs to the TRAFAC class TrmE-Era-EngA-EngB-Septin-like GTPase superfamily. EngB GTPase family. Requires Mg(2+) as cofactor.

Functionally, necessary for normal cell division and for the maintenance of normal septation. The chain is Probable GTP-binding protein EngB from Geobacillus thermodenitrificans (strain NG80-2).